The primary structure comprises 163 residues: NADH-quinone oxidoreductase subunit I (163 aa).

2 4Fe-4S ferredoxin-type domains span residues 54–84 (LRRY…IESD) and 94–123 (TRYD…ETHI). [4Fe-4S] cluster is bound by residues C64, C67, C70, C74, C103, C106, C109, and C113.

Belongs to the complex I 23 kDa subunit family. In terms of assembly, NDH-1 is composed of 14 different subunits. Subunits NuoA, H, J, K, L, M, N constitute the membrane sector of the complex. It depends on [4Fe-4S] cluster as a cofactor.

Its subcellular location is the cell inner membrane. It carries out the reaction a quinone + NADH + 5 H(+)(in) = a quinol + NAD(+) + 4 H(+)(out). Its function is as follows. NDH-1 shuttles electrons from NADH, via FMN and iron-sulfur (Fe-S) centers, to quinones in the respiratory chain. The immediate electron acceptor for the enzyme in this species is believed to be ubiquinone. Couples the redox reaction to proton translocation (for every two electrons transferred, four hydrogen ions are translocated across the cytoplasmic membrane), and thus conserves the redox energy in a proton gradient. The protein is NADH-quinone oxidoreductase subunit I of Cupriavidus metallidurans (strain ATCC 43123 / DSM 2839 / NBRC 102507 / CH34) (Ralstonia metallidurans).